The chain runs to 141 residues: MQLTSFTDYALRTLIYLASLPKDELTNITEVTDLFGVSRNHMVKVINRLGQLGYVHTVRGKNGGIRLMKPASEITVGGVVRDLEPLDLVNCGVEFCHITPACRLKDKLAKAKSAFLAELDECTIESLLSDNSELLILLARP.

The 128-residue stretch at 2–129 (QLTSFTDYAL…DECTIESLLS (128 aa)) folds into the HTH rrf2-type domain. The H-T-H motif DNA-binding region spans 28-51 (ITEVTDLFGVSRNHMVKVINRLGQ). [2Fe-2S] cluster-binding residues include Cys91, Cys96, and Cys102.

[2Fe-2S] cluster is required as a cofactor.

Functionally, nitric oxide-sensitive repressor of genes involved in protecting the cell against nitrosative stress. May require iron for activity. This is HTH-type transcriptional repressor NsrR from Vibrio parahaemolyticus serotype O3:K6 (strain RIMD 2210633).